A 423-amino-acid polypeptide reads, in one-letter code: G2/mitotic-specific cyclin-B1 (423 aa).

Ser-116 is modified (phosphoserine; by CDK1). Position 118 is a phosphoserine (Ser-118). Ser-123 carries the phosphoserine; by PLK1 modification. A Phosphoserine modification is found at Ser-137. Interaction with CDK2 stretches follow at residues 159–167 (EYVKDIYAY) and 248–251 (YEEM). At Thr-311 the chain carries Phosphothreonine.

The protein belongs to the cyclin family. Cyclin AB subfamily. In terms of assembly, interacts with the CDC2 protein kinase to form a serine/threonine kinase holoenzyme complex also known as maturation promoting factor (MPF). The cyclin subunit imparts substrate specificity to the complex. Binds HEI10. Interacts with catalytically active RALBP1 and CDC2 during mitosis to form an endocytotic complex during interphase. Interacts with CCNF; interaction is required for nuclear localization. Interacts with CDK5RAP3. Interacts with RFPL4A and UBE2A. Interacts with INCA1. Ubiquitinated by the SCF(NIPA) complex during interphase, leading to its destruction. Deubiquitinated by USP22 during G2/M phase. Post-translationally, phosphorylated by PLK1 at Ser-123 on centrosomes during prophase: phosphorylation by PLK1 does not cause nuclear import. Phosphorylation at Ser-137 was also reported to be mediated by PLK1 but Ser-123 seems to be the primary phosphorylation site.

It is found in the cytoplasm. It localises to the nucleus. Its subcellular location is the cytoskeleton. The protein resides in the microtubule organizing center. The protein localises to the centrosome. Its function is as follows. Essential for the control of the cell cycle at the G2/M (mitosis) transition. This Rattus norvegicus (Rat) protein is G2/mitotic-specific cyclin-B1 (Ccnb1).